We begin with the raw amino-acid sequence, 61 residues long: Small ribosomal subunit protein uS14 (61 aa).

Zn(2+)-binding residues include Cys-24, Cys-27, Cys-40, and Cys-43.

It belongs to the universal ribosomal protein uS14 family. Zinc-binding uS14 subfamily. As to quaternary structure, part of the 30S ribosomal subunit. Contacts proteins S3 and S10. Zn(2+) is required as a cofactor.

Binds 16S rRNA, required for the assembly of 30S particles and may also be responsible for determining the conformation of the 16S rRNA at the A site. This Alkaliphilus oremlandii (strain OhILAs) (Clostridium oremlandii (strain OhILAs)) protein is Small ribosomal subunit protein uS14.